Reading from the N-terminus, the 358-residue chain is Type II restriction enzyme CviJI (358 aa).

Mg(2+) is required as a cofactor.

It catalyses the reaction Endonucleolytic cleavage of DNA to give specific double-stranded fragments with terminal 5'-phosphates.. Functionally, a P subtype restriction enzyme that recognizes the double-stranded sequence 5'-RGCY-3' and cleaves after G-2. In the presence of ATP, there is a relaxation of its specificity and it can cleave 5'-RGCN-3' and 5'-YGCY-3', but not 5'-YGCR-3' (R.CviJI* activity). In Paramecium bursaria Chlorella virus IL3A (PBCV-IL3A), this protein is Type II restriction enzyme CviJI.